A 49-amino-acid chain; its full sequence is Large ribosomal subunit protein bL33A (49 aa).

Belongs to the bacterial ribosomal protein bL33 family.

The protein is Large ribosomal subunit protein bL33A of Bacillus licheniformis (strain ATCC 14580 / DSM 13 / JCM 2505 / CCUG 7422 / NBRC 12200 / NCIMB 9375 / NCTC 10341 / NRRL NRS-1264 / Gibson 46).